Reading from the N-terminus, the 269-residue chain is Protein shisa-1 (269 aa).

Residues 1–18 (MEFIVLLTVCALLGLSCG) form the signal peptide. Over 19–98 (QHGEYCHGWT…LPPTVPTYFP (80 aa)) the chain is Extracellular. Residues 99-119 (FLLVGSIFVSFVILGSLVGLC) form a helical membrane-spanning segment. The Cytoplasmic portion of the chain corresponds to 120-269 (CCKCLKPEDD…TVCSGSPSKC (150 aa)). Residues 129 to 167 (DTQVSGPAPIQSRLLDQDPSTDTSRHSSSSSASMPRPPI) form a disordered region. Residues 146–162 (DPSTDTSRHSSSSSASM) are compositionally biased toward low complexity.

The protein belongs to the shisa family. As to quaternary structure, interacts with immature forms of fzd8 and fgfr.

It localises to the endoplasmic reticulum. It is found in the membrane. In terms of biological role, required for head formation during gastrulation. Functions as an inhibitor for the caudalizing signals wnt and fgf, does not inhibit bmp, activin and nodal signaling in head formation process. Induces retention of fzd8 in the endoplasmic reticulum and inhibits trafficking of fzd8 to the cell surface. This Xenopus laevis (African clawed frog) protein is Protein shisa-1 (shisa1).